The following is a 1848-amino-acid chain: Histone-lysine N-methyltransferase, H3 lysine-79 specific (1848 aa).

The region spanning 19-336 (DVISFAWPLQ…ILERYFQRLK (318 aa)) is the DOT1 domain. S-adenosyl-L-methionine-binding positions include 142–145 (YGET), 165–174 (FIDLGSGVGQ), glutamate 192, and 228–229 (DF). 14 disordered regions span residues 338–537 (KGGN…TRKA), 558–593 (AVSV…ARGR), 886–908 (LNSV…WPEV), 960–996 (PPPA…QMTL), 1033–1075 (LNED…AQSL), 1165–1190 (HMAS…RSSV), 1221–1333 (QRQQ…TQVS), 1345–1374 (QEKL…KTIG), 1432–1463 (VHVR…GGAA), 1486–1508 (ARAN…GRDY), 1529–1559 (EQQQ…PPLE), 1573–1604 (KYKE…LPTH), 1637–1713 (SPLA…VDPP), and 1731–1757 (QLSH…LQLT). Basic and acidic residues predominate over residues 339 to 360 (GGNDHESVGTVRTTRDRAKREA). Basic residues predominate over residues 364 to 373 (QHHHNNHHSN). The span at 391 to 405 (ATATAAHQQRHQSQS) shows a compositional bias: low complexity. Polar residues predominate over residues 419-428 (SGQQAASKTR). 2 stretches are compositionally biased toward low complexity: residues 429-439 (QQLQHQHNQQQ) and 453-474 (DATN…ASNG). 3 positions are modified to phosphoserine: serine 491, serine 492, and serine 494. The segment covering 507 to 518 (GSNGGSIGGGSV) has biased composition (gly residues). Composition is skewed to basic residues over residues 526 to 535 (TQKKRKKLTR) and 582 to 593 (RKGRMKKGARGR). The segment covering 1221–1235 (QRQQMRVEEQQQQQQ) has biased composition (low complexity). Positions 1236 to 1263 (HQHHHHHHHHHPQHRLPQHVQHQHPHQH) are enriched in basic residues. Residues 1289–1300 (EPPQTQPLELLP) are compositionally biased toward low complexity. Phosphoserine is present on residues serine 1318, serine 1324, and serine 1325. Residues 1532–1545 (QKQSKGAGSAGSSS) are compositionally biased toward low complexity. Residues 1574–1583 (YKEETEERQR) show a composition bias toward basic and acidic residues. 2 stretches are compositionally biased toward low complexity: residues 1585–1598 (AAAA…PPAG) and 1681–1696 (HDAT…SSSS). The segment covering 1697 to 1706 (CGRRSNSNNG) has biased composition (polar residues).

It belongs to the class I-like SAM-binding methyltransferase superfamily. DOT1 family. In terms of tissue distribution, broadly expressed in most tissues. Expressed in a large subset of neurons and in a small subset of glial cells.

Its subcellular location is the nucleus. The catalysed reaction is L-lysyl(79)-[histone H3] + 3 S-adenosyl-L-methionine = N(6),N(6),N(6)-trimethyl-L-lysyl(79)-[histone H3] + 3 S-adenosyl-L-homocysteine + 3 H(+). Histone methyltransferase. Methylates 'Lys-79' of histone H3. Required for Polycomb Group (PcG) and trithorax Group (trxG) maintenance of expression. Also involved in telomeric silencing but do not in centric heterochromatin. Probably participates in pairing sensitivity. The sequence is that of Histone-lysine N-methyltransferase, H3 lysine-79 specific (gpp) from Drosophila melanogaster (Fruit fly).